The chain runs to 211 residues: Protein-methionine-sulfoxide reductase heme-binding subunit MsrQ (211 aa).

The next 4 membrane-spanning stretches (helical) occupy residues 17–37 (LAGL…GLGA), 82–102 (LWCF…ELGV), 116–136 (PYLT…FTST), and 153–173 (FVYL…KIIS).

The protein belongs to the MsrQ family. As to quaternary structure, heterodimer of a catalytic subunit (MsrP) and a heme-binding subunit (MsrQ). FMN serves as cofactor. Requires heme b as cofactor.

Its subcellular location is the cell inner membrane. In terms of biological role, part of the MsrPQ system that repairs oxidized periplasmic proteins containing methionine sulfoxide residues (Met-O), using respiratory chain electrons. Thus protects these proteins from oxidative-stress damage caused by reactive species of oxygen and chlorine generated by the host defense mechanisms. MsrPQ is essential for the maintenance of envelope integrity under bleach stress, rescuing a wide series of structurally unrelated periplasmic proteins from methionine oxidation, including the primary periplasmic chaperone SurA and the lipoprotein Pal. MsrQ provides electrons for reduction to the reductase catalytic subunit MsrP, using the quinone pool of the respiratory chain. The chain is Protein-methionine-sulfoxide reductase heme-binding subunit MsrQ from Shigella sonnei (strain Ss046).